The following is a 159-amino-acid chain: Probable RNA-binding protein EIF1AD (159 aa).

An S1-like domain is found at 18–93 (MMEDDYALPT…VKAEICKILT (76 aa)). A disordered region spans residues 109-159 (KFTKKPVQEEATSQNKDDSDFEDDLLPNTNRPVNRDSSDEEEDEETSSEED). Residues 146–159 (SDEEEDEETSSEED) are compositionally biased toward acidic residues.

Belongs to the EIF1AD family.

The polypeptide is Probable RNA-binding protein EIF1AD (Drosophila melanogaster (Fruit fly)).